The chain runs to 773 residues: ATP-dependent permease MDL2, mitochondrial (773 aa).

A mitochondrion-targeting transit peptide spans 1–90 (MLNGRLPLLR…SPISKGSARS (90 aa)). Positions 73-84 (PETSLPSASPIS) are enriched in polar residues. Residues 73-95 (PETSLPSASPISKGSARSAHAKE) are disordered. One can recognise an ABC transmembrane type-1 domain in the interval 119–413 (LLTAILLLTI…LSTFYSEIMQ (295 aa)). The next 3 helical transmembrane spans lie at 123-143 (ILLLTISCSIGMSIPKVIGIV), 170-192 (FLSFFTVALLIGCAANFGRFILL), and 257-277 (VVGVGMMCSLSPQLSILLLFF). 481-488 (GPSGRGKS) contributes to the ATP binding site. Residues 493-733 (LLLRYYNPTT…DDNDNNHDND (241 aa)) form the ABC transporter domain. Composition is skewed to basic and acidic residues over residues 706–733 (KEDLNESKEHDDQKKDDNDDNDNNHDND) and 740–762 (ETKDNNSDDIEKSVEHLLKDAAK). Positions 706–773 (KEDLNESKEH…ANPIKITPQP (68 aa)) are disordered.

Belongs to the ABC transporter superfamily. ABCB family. Mitochondrial peptide exporter (TC 3.A.1.212) subfamily.

The protein resides in the mitochondrion inner membrane. This chain is ATP-dependent permease MDL2, mitochondrial (MDL2), found in Saccharomyces cerevisiae (strain ATCC 204508 / S288c) (Baker's yeast).